Here is a 267-residue protein sequence, read N- to C-terminus: Indole-3-glycerol phosphate synthase (267 aa).

It belongs to the TrpC family.

It carries out the reaction 1-(2-carboxyphenylamino)-1-deoxy-D-ribulose 5-phosphate + H(+) = (1S,2R)-1-C-(indol-3-yl)glycerol 3-phosphate + CO2 + H2O. The protein operates within amino-acid biosynthesis; L-tryptophan biosynthesis; L-tryptophan from chorismate: step 4/5. The chain is Indole-3-glycerol phosphate synthase from Polynucleobacter necessarius subsp. necessarius (strain STIR1).